A 175-amino-acid polypeptide reads, in one-letter code: Capsid protein (175 aa).

The interval 1–35 (MFRQEMARYPKKSIKKRRVGRRKYGSKAATSHDYS) is disordered. The span at 9–25 (YPKKSIKKRRVGRRKYG) shows a compositional bias: basic residues.

The protein belongs to the nanoviridae capsid protein family.

The protein resides in the virion. This is Capsid protein (DNA-S) from Musa (BBTV).